The following is a 390-amino-acid chain: GTPase Obg (390 aa).

Residues methionine 1–leucine 159 enclose the Obg domain. The interval asparagine 127–glycine 147 is disordered. Residues arginine 129–threonine 145 show a composition bias toward polar residues. The 174-residue stretch at alanine 160–isoleucine 333 folds into the OBG-type G domain. GTP is bound by residues glycine 166–serine 173, phenylalanine 191–valine 195, aspartate 213–glycine 216, asparagine 283–aspartate 286, and serine 314–alanine 316. Residues serine 173 and threonine 193 each coordinate Mg(2+).

Belongs to the TRAFAC class OBG-HflX-like GTPase superfamily. OBG GTPase family. In terms of assembly, monomer. It depends on Mg(2+) as a cofactor.

It localises to the cytoplasm. Functionally, an essential GTPase which binds GTP, GDP and possibly (p)ppGpp with moderate affinity, with high nucleotide exchange rates and a fairly low GTP hydrolysis rate. Plays a role in control of the cell cycle, stress response, ribosome biogenesis and in those bacteria that undergo differentiation, in morphogenesis control. This is GTPase Obg from Salmonella gallinarum (strain 287/91 / NCTC 13346).